The chain runs to 210 residues: Na(+)-translocating NADH-quinone reductase subunit D (210 aa).

The next 5 helical transmembrane spans lie at Phe42–Ile62, Ile72–Ala92, Val103–Met123, Phe131–Phe151, and Asn178–Ile198.

The protein belongs to the NqrDE/RnfAE family. In terms of assembly, composed of six subunits; NqrA, NqrB, NqrC, NqrD, NqrE and NqrF.

The protein resides in the cell inner membrane. It catalyses the reaction a ubiquinone + n Na(+)(in) + NADH + H(+) = a ubiquinol + n Na(+)(out) + NAD(+). NQR complex catalyzes the reduction of ubiquinone-1 to ubiquinol by two successive reactions, coupled with the transport of Na(+) ions from the cytoplasm to the periplasm. NqrA to NqrE are probably involved in the second step, the conversion of ubisemiquinone to ubiquinol. In Aliivibrio fischeri (strain ATCC 700601 / ES114) (Vibrio fischeri), this protein is Na(+)-translocating NADH-quinone reductase subunit D.